Consider the following 95-residue polypeptide: Small ribosomal subunit protein bS6 (95 aa).

Belongs to the bacterial ribosomal protein bS6 family.

Its function is as follows. Binds together with bS18 to 16S ribosomal RNA. The protein is Small ribosomal subunit protein bS6 of Bacillus cytotoxicus (strain DSM 22905 / CIP 110041 / 391-98 / NVH 391-98).